We begin with the raw amino-acid sequence, 169 residues long: Peptide methionine sulfoxide reductase MsrA (169 aa).

Cysteine 10 is an active-site residue.

This sequence belongs to the MsrA Met sulfoxide reductase family.

The enzyme catalyses L-methionyl-[protein] + [thioredoxin]-disulfide + H2O = L-methionyl-(S)-S-oxide-[protein] + [thioredoxin]-dithiol. It catalyses the reaction [thioredoxin]-disulfide + L-methionine + H2O = L-methionine (S)-S-oxide + [thioredoxin]-dithiol. Functionally, has an important function as a repair enzyme for proteins that have been inactivated by oxidation. Catalyzes the reversible oxidation-reduction of methionine sulfoxide in proteins to methionine. The protein is Peptide methionine sulfoxide reductase MsrA of Streptococcus uberis (strain ATCC BAA-854 / 0140J).